Consider the following 294-residue polypeptide: Casein kinase II subunit beta (294 aa).

Disordered stretches follow at residues 66 to 90 (DHNT…SKRN) and 269 to 294 (KRME…MASE). A compositionally biased stretch (low complexity) spans 70–87 (DNTTTNTSNNNDSRNGTS). Residues 273–288 (EDDEEEEDEVEEEDDD) show a composition bias toward acidic residues.

Belongs to the casein kinase 2 subunit beta family. Tetramer composed of two alpha chains, one beta chain and one beta' chain. Phosphorylated by alpha subunit.

In terms of biological role, regulatory subunit of casein kinase II/CK2. As part of the kinase complex regulates the basal catalytic activity of the alpha subunit a constitutively active serine/threonine-protein kinase that phosphorylates a large number of substrates containing acidic residues C-terminal to the phosphorylated serine or threonine. This chain is Casein kinase II subunit beta (CKB1), found in Candida albicans (Yeast).